The primary structure comprises 714 residues: ABC transporter B family member 28 (714 aa).

5 helical membrane passes run Leu-109–Phe-129, Ile-161–Leu-181, Ile-240–Ala-260, Val-340–Gly-360, and Glu-361–Val-381. The ABC transmembrane type-1 domain occupies Leu-109–Gly-393. Positions Val-470 to Thr-708 constitute an ABC transporter domain. ATP is bound at residue Gly-505–Ser-512.

The protein belongs to the ABC transporter superfamily. ABCB family. Multidrug resistance exporter (TC 3.A.1.201) subfamily.

It is found in the membrane. The polypeptide is ABC transporter B family member 28 (ABCB28) (Arabidopsis thaliana (Mouse-ear cress)).